The sequence spans 407 residues: Cell division control protein 12 (407 aa).

Ser-2 is subject to N-acetylserine. A Septin-type G domain is found at 31–314 (EGGTFTVMLC…ETYRRLRLEG (284 aa)). Residues 41 to 48 (GESGLGKT) form a G1 motif region. GTP-binding positions include 41 to 48 (GESGLGKT), Thr-75, Gly-101, 180 to 188 (KADTLTAQE), Gly-247, and Arg-263. The G3 motif stretch occupies residues 98 to 101 (DTPG). The G4 motif stretch occupies residues 179–182 (AKAD). Residues 344–406 (EEENALKKYF…KSLQVKKSHL (63 aa)) adopt a coiled-coil conformation.

This sequence belongs to the TRAFAC class TrmE-Era-EngA-EngB-Septin-like GTPase superfamily. Septin GTPase family. As to quaternary structure, component of the septin complex which consists of CDC3, CDC10, CDC11, CDC12 and probably SHS1 and rearranges to a cortical collar of highly ordered filaments at the mother-bud-neck. A complex formed by CDC3, CDC10, CDC11 and CDC12 is capable of forming long filaments in vitro and the components seem to be present in a 2:2:2:2 arrangement in vivo. The filaments are proposed to be formed by the end-to-end polymerization of CDC3-CDC12-CDC11 complexes with CDC10 serving as a bridge to bundle the polymers into paired filaments. Component of the GIN4 complex composed of at least BNI5, CDC3, CDC10, CDC11, CDC12, GIN4, NAP1 and SHS1. Self-associates. Interacts with SYP1.

The protein localises to the membrane. Its subcellular location is the bud neck. In terms of biological role, septins are GTPases involved in cytokinesis that assemble early in the cell cycle as a patch at the incipient bud site and form a ring approximate 15 minutes before bud emergence, which transforms into an hour-glass shaped collar of cortical filaments that spans both sides of the mother-bud neck. This collar persists until just before cytokinesis, when it splits into two rings that occupy opposite sides of the neck. The septins at the bud neck serve as a structural scaffold that recruits different components involved in diverse processes at specific stages during the cell cycle. Many proteins bind asymmetrically to the septin collar. The septin assembly is regulated by protein kinases GIN4 and/or CLA4. May act by recruiting MYO1 and HOF1, a protein involved in septation, to the site of cleavage. Septins are also involved in cell morphogenesis, bud site selection, chitin deposition, cell cycle regulation, cell compartmentalization and spore wall formation. This chain is Cell division control protein 12 (CDC12), found in Saccharomyces cerevisiae (strain ATCC 204508 / S288c) (Baker's yeast).